Here is a 183-residue protein sequence, read N- to C-terminus: Endoribonuclease YbeY (183 aa).

Zn(2+) contacts are provided by histidine 118, histidine 122, and histidine 128. The tract at residues 156 to 183 (EREQAQRSADSAVLGAVGLEEQDGPGTH) is disordered.

It belongs to the endoribonuclease YbeY family. It depends on Zn(2+) as a cofactor.

Its subcellular location is the cytoplasm. Functionally, single strand-specific metallo-endoribonuclease involved in late-stage 70S ribosome quality control and in maturation of the 3' terminus of the 16S rRNA. This chain is Endoribonuclease YbeY, found in Saccharopolyspora erythraea (strain ATCC 11635 / DSM 40517 / JCM 4748 / NBRC 13426 / NCIMB 8594 / NRRL 2338).